Consider the following 853-residue polypeptide: Aryl hydrocarbon receptor (853 aa).

Positions 1-9 (MSSGANITY) are excised as a propeptide. Positions 1-38 (MSSGANITYASRKRRKPVQKTVKPVPAEGIKSNPSKRH) are disordered. 2 short sequence motifs (nuclear localization signal) span residues 12–15 (RKRR) and 36–41 (KRHRDR). A bHLH domain is found at 26–79 (PAEGIKSNPSKRHRDRLNTELDRLASLLPFPQDVINKLDKLSVLRLSVSYLRAK). The tract at residues 37–65 (RHRDRLNTELDRLASLLPFPQDVINKLDK) is DNA-binding. Required for maintaining the overall integrity of the AHR:ARNT heterodimer and its transcriptional activity regions lie at residues 49 to 81 (LASL…AKSF), 116 to 124 (LLQALNGFV), and 264 to 266 (FAI). Positions 63 to 71 (LDKLSVLRL) match the Nuclear export signal motif. The PAS 1 domain maps to 116-179 (LLQALNGFVL…RQLHWALNPS (64 aa)). The PAS 2 domain maps to 273–340 (PSILEIRTKN…CAESHIRMIK (68 aa)). Positions 346-384 (MTVFRLLAKHSRWRWVQSNARLIYRNGRPDYIIATQRPL) constitute a PAC domain. The tract at residues 429 to 451 (TKSNTSRKDWAPQSTPSKDSFHP) is disordered. Over residues 440–451 (PQSTPSKDSFHP) the composition is skewed to polar residues.

As to quaternary structure, homodimer. Heterodimer; efficient DNA binding requires dimerization with another bHLH protein. Interacts with ARNT; the heterodimer ARNT:AHR binds to core DNA sequence 5'-TGCGTG-3' within the dioxin response element (DRE) of target gene promoters and activates their transcription. Binds MYBBP1A. Interacts with coactivators including SRC-1, RIP140 and NOCA7, and with the corepressor SMRT. Interacts with NEDD8 and IVNS1ABP. Interacts with BMAL1. Interacts with HSP90AB1. Interacts with TIPARP; leading to mono-ADP-ribosylation of AHR and subsequent inhibition of AHR. Mono-ADP-ribosylated, leading to inhibit transcription activator activity of AHR. As to expression, expressed in all tissues tested including brain, heart, kidney, liver, lung, spleen, skeletal muscle and thymus.

Its subcellular location is the cytoplasm. It localises to the nucleus. Its function is as follows. Ligand-activated transcription factor that enables cells to adapt to changing conditions by sensing compounds from the environment, diet, microbiome and cellular metabolism, and which plays important roles in development, immunity and cancer. Upon ligand binding, translocates into the nucleus, where it heterodimerizes with ARNT and induces transcription by binding to xenobiotic response elements (XRE). Regulates a variety of biological processes, including angiogenesis, hematopoiesis, drug and lipid metabolism, cell motility and immune modulation. Xenobiotics can act as ligands: upon xenobiotic-binding, activates the expression of multiple phase I and II xenobiotic chemical metabolizing enzyme genes (such as the CYP1A1 gene). Mediates biochemical and toxic effects of halogenated aromatic hydrocarbons. Next to xenobiotics, natural ligands derived from plants, microbiota, and endogenous metabolism are potent AHR agonists. Tryptophan (Trp) derivatives constitute an important class of endogenous AHR ligands. Acts as a negative regulator of anti-tumor immunity: indoles and kynurenic acid generated by Trp catabolism act as ligand and activate AHR, thereby promoting AHR-driven cancer cell motility and suppressing adaptive immunity. Regulates the circadian clock by inhibiting the basal and circadian expression of the core circadian component PER1. Inhibits PER1 by repressing the CLOCK-BMAL1 heterodimer mediated transcriptional activation of PER1. The heterodimer ARNT:AHR binds to core DNA sequence 5'-TGCGTG-3' within the dioxin response element (DRE) of target gene promoters and activates their transcription. The sequence is that of Aryl hydrocarbon receptor (Ahr) from Rattus norvegicus (Rat).